Reading from the N-terminus, the 220-residue chain is Deoxyribose-phosphate aldolase (220 aa).

The active-site Proton donor/acceptor is the aspartate 89. Lysine 151 serves as the catalytic Schiff-base intermediate with acetaldehyde. Lysine 180 functions as the Proton donor/acceptor in the catalytic mechanism.

The protein belongs to the DeoC/FbaB aldolase family. DeoC type 1 subfamily.

It localises to the cytoplasm. The catalysed reaction is 2-deoxy-D-ribose 5-phosphate = D-glyceraldehyde 3-phosphate + acetaldehyde. It functions in the pathway carbohydrate degradation; 2-deoxy-D-ribose 1-phosphate degradation; D-glyceraldehyde 3-phosphate and acetaldehyde from 2-deoxy-alpha-D-ribose 1-phosphate: step 2/2. Catalyzes a reversible aldol reaction between acetaldehyde and D-glyceraldehyde 3-phosphate to generate 2-deoxy-D-ribose 5-phosphate. The sequence is that of Deoxyribose-phosphate aldolase from Streptococcus suis (strain 98HAH33).